The chain runs to 286 residues: Main hemagglutinin component type C (286 aa).

The 1-alpha repeat unit spans residues 2–55 (SQTNANDLRNNEVFFISPSNNTNKVLDKISQSEVKLWNKLSGANQKWRLIYDTN). Ricin B-type lectin domains lie at 12-140 (NEVF…FKFS) and 180-284 (DSSR…WIIN). A 1-beta repeat occupies 56–100 (KQAYKIKVMDNTSLILTWNAPLSSVSVKTDTNGDNQYWYLLQNYI). The stretch at 101–148 (SRNVIIRNYMNPNLVLQYNIDDTLMVSTQTSSSNQFFKFSNCIYEALN) is one 1-gamma repeat. One copy of the 2-alpha repeat lies at 149 to 193 (NRNCKLQTQLNSDRFLSKNLNSQIIVLWQWFDSSRQKWIIEYNET). The segment at 167–183 (NLNSQIIVLWQWFDSSR) is sugar-binding site 1. The stretch at 194–239 (KSAYTLKCQENNRYLTWIQNSNNYVETYQSTDSLIQYWNINYLDND) is one 2-beta repeat. The stretch at 240 to 286 (ASKYILYNLQDTNRVLDVYNSQIANGTHVIVDSYHGNTNQQWIINLI) is one 2-gamma repeat. The sugar-binding site 2 stretch occupies residues 256-279 (DVYNSQIANGTHVIVDSYHGNTNQ).

As to quaternary structure, botulinum toxins are produced as progenitor toxins of large molecular sizes of 12S (M toxin) and 16S (L toxin). M toxin consists of a non-toxic, non-hemagglutinin component (NTNHA) and the neurotoxin. L toxin consists of the M toxin and the 3 subcomponents of hemagglutinin (HA). HA is composed of subcomponents of 70, 33, and 17 kDa. The 70 kDa subcomponent undergoes proteolytic processing and is split into HA-55 (also called HA-53 and HA3b) and HA-22-23 (also called HA3a). The stoichiometry of the whole complex has been modeled as one BoNT/C, one NTNHA, three HA-70, six HA-33 and three HA-17.

It localises to the secreted. Its function is as follows. Agglutinates human erythrocytes. The hemagglutinin (HA) component of the progenitor toxin protects the structural integrity of botulinum neurotoxin; may increase internalization of the neurotoxin into the bloodstream of the host. The hemagglutinin (HA) component is involved in binding to the upper small intestine through interactions with glycolipids and glycoproteins containing sialic acid moieties. Binds galactose or oligosaccharides with galactose at their non-reducing end. Binds eukaryotic host mucins; binding is inhibited by N-acetyl-beta-neuraminic acid, N-acetyl-D-galactosamine, galactose, and methyl N-acetyl-beta-neuraminic acid. Binds N-acetyl-beta-neuraminic acid, N-acetyl-D-galactosamine and galactose (but not glucose) via 2 sites. This chain is Main hemagglutinin component type C, found in Clostridium botulinum C (Clostridium botulinum C bacteriophage).